Reading from the N-terminus, the 346-residue chain is Glycerol-3-phosphate dehydrogenase [NAD(P)+] (346 aa).

NADPH-binding residues include S15, W16, R36, and K110. Residues K110, G139, and S141 each contribute to the sn-glycerol 3-phosphate site. A143 contacts NADPH. Residues K194, D247, S257, R258, and N259 each coordinate sn-glycerol 3-phosphate. Catalysis depends on K194, which acts as the Proton acceptor. R258 lines the NADPH pocket. 2 residues coordinate NADPH: V282 and E284.

Belongs to the NAD-dependent glycerol-3-phosphate dehydrogenase family.

It is found in the cytoplasm. The catalysed reaction is sn-glycerol 3-phosphate + NAD(+) = dihydroxyacetone phosphate + NADH + H(+). The enzyme catalyses sn-glycerol 3-phosphate + NADP(+) = dihydroxyacetone phosphate + NADPH + H(+). The protein operates within membrane lipid metabolism; glycerophospholipid metabolism. In terms of biological role, catalyzes the reduction of the glycolytic intermediate dihydroxyacetone phosphate (DHAP) to sn-glycerol 3-phosphate (G3P), the key precursor for phospholipid synthesis. This is Glycerol-3-phosphate dehydrogenase [NAD(P)+] from Xylella fastidiosa (strain M23).